Reading from the N-terminus, the 903-residue chain is Immunoglobulin superfamily member 22 (903 aa).

Ig-like domains are found at residues 67–158 (PEFV…LLVT), 232–322 (EAIR…AELT), 418–508 (PIKF…AIVT), and 606–696 (PSVL…LHLS). 2 Fibronectin type-III domains span residues 703 to 798 (FASQ…AKDP) and 804 to 898 (LVQD…MPPP).

The protein is Immunoglobulin superfamily member 22 (IGSF22) of Homo sapiens (Human).